Here is a 347-residue protein sequence, read N- to C-terminus: uncharacterized protein (347 aa).

This is an uncharacterized protein from Sinorhizobium fredii (strain NBRC 101917 / NGR234).